The primary structure comprises 59 residues: UPF0434 protein RHOS4_00640 (59 aa).

The protein belongs to the UPF0434 family.

In Cereibacter sphaeroides (strain ATCC 17023 / DSM 158 / JCM 6121 / CCUG 31486 / LMG 2827 / NBRC 12203 / NCIMB 8253 / ATH 2.4.1.) (Rhodobacter sphaeroides), this protein is UPF0434 protein RHOS4_00640.